Consider the following 203-residue polypeptide: uncharacterized protein (203 aa).

Positions 1-20 are cleaved as a signal peptide; sequence MDELILPILILLFLVFVAYF.

This is an uncharacterized protein from Pasteurella multocida (strain Pm70).